A 524-amino-acid chain; its full sequence is L-tyrosine:2-oxoglutarate aminotransferase atrD (524 aa).

It belongs to the class-I pyridoxal-phosphate-dependent aminotransferase family. Pyridoxal 5'-phosphate serves as cofactor.

The enzyme catalyses L-tyrosine + 2-oxoglutarate = 3-(4-hydroxyphenyl)pyruvate + L-glutamate. Its pathway is secondary metabolite biosynthesis. The L-tyrosine:2-oxoglutarate aminotransferase atrD and the atromentin synthetase atrA catalyze consecutive steps to turn over L-tyrosine into atromentin, which represents the generic precursor molecule for the entire terphenylquinone and pulvinic acid family of pigments, which are widely distributed secondary metabolites in homobasidiomycetes. The first step is catalyzed by atrD which converts L-tyrosine in to 4-hydroxyphenylpyruvate (4-HPP). Adenylation of two 4-HPP monomers by the atrA adenylation (A) domain, ester bond formation between monomers and atrA, and symmetric C-C-bond formation between two monomers by atrA leads to atromentin. In Tapinella panuoides (Oyster rollrim mushroom), this protein is L-tyrosine:2-oxoglutarate aminotransferase atrD.